The primary structure comprises 294 residues: Large ribosomal subunit protein uL2 (294 aa).

Disordered regions lie at residues 1–37 and 228–294; these read MGIR…RPEK and GSVM…RAAQ. Polar residues predominate over residues 10–22; sequence TPSTRHMTVSNFE. A compositionally biased stretch (basic and acidic residues) spans 23 to 37; that stretch reads ELSRDENGKRPRPEK. Residues 264–285 are compositionally biased toward basic residues; that stretch reads KTRKRNKPSNKFIVRGRRRGGR.

This sequence belongs to the universal ribosomal protein uL2 family. As to quaternary structure, part of the 50S ribosomal subunit. Forms a bridge to the 30S subunit in the 70S ribosome.

In terms of biological role, one of the primary rRNA binding proteins. Required for association of the 30S and 50S subunits to form the 70S ribosome, for tRNA binding and peptide bond formation. It has been suggested to have peptidyltransferase activity; this is somewhat controversial. Makes several contacts with the 16S rRNA in the 70S ribosome. In Synechococcus sp. (strain JA-3-3Ab) (Cyanobacteria bacterium Yellowstone A-Prime), this protein is Large ribosomal subunit protein uL2.